A 515-amino-acid chain; its full sequence is Meiotically up-regulated gene 68 protein (515 aa).

The disordered stretch occupies residues 165–204 (LHSIESERNESSLSLDSGESEKKSEEDNGNGEQNYIPEQY).

Its function is as follows. Has a role in meiosis. In Schizosaccharomyces pombe (strain 972 / ATCC 24843) (Fission yeast), this protein is Meiotically up-regulated gene 68 protein (mug68).